A 1423-amino-acid polypeptide reads, in one-letter code: Protein phosphatase Slingshot homolog 2 (1423 aa).

Disordered stretches follow at residues methionine 1–isoleucine 37 and leucine 51–alanine 70. Over residues serine 9–proline 18 the composition is skewed to low complexity. Phosphoserine is present on residues serine 17, serine 25, and serine 36. The DEK-C domain maps to glutamate 248 to glycine 303. A Tyrosine-protein phosphatase domain is found at serine 307–alanine 448. Catalysis depends on cysteine 392, which acts as the Phosphocysteine intermediate. Residues serine 461, serine 487, serine 534, serine 631, and serine 633 each carry the phosphoserine modification. Disordered regions lie at residues glutamate 698 to glutamine 725, histidine 833 to glycine 858, arginine 878 to arginine 950, alanine 967 to valine 991, serine 1021 to leucine 1042, proline 1074 to cysteine 1105, and proline 1207 to histidine 1226. The segment covering histidine 884–serine 904 has biased composition (polar residues). Basic and acidic residues-rich tracts occupy residues proline 910–lysine 932, serine 976–lysine 987, and proline 1033–leucine 1042. Position 1217 is a phosphoserine (serine 1217). The residue at position 1422 (threonine 1422) is a Phosphothreonine.

Belongs to the protein-tyrosine phosphatase family. Interacts with filamentous actin. In terms of tissue distribution, expressed in brain, heart, liver, skeletal muscle, testis and thymus. Also expressed at lower levels in kidney, small intestine and spleen. Within testicular seminiferous tubules expressed in germ cells and spermatocytes, where it has a cytoplasmic localization, and round spermatids, where it concentrates in the acrosomal region next to the nucleus.

The protein resides in the cytoplasm. The protein localises to the cytoskeleton. Its subcellular location is the cell junction. It localises to the focal adhesion. It is found in the cytoplasmic vesicle. The protein resides in the secretory vesicle. The protein localises to the acrosome. The catalysed reaction is O-phospho-L-tyrosyl-[protein] + H2O = L-tyrosyl-[protein] + phosphate. It carries out the reaction O-phospho-L-seryl-[protein] + H2O = L-seryl-[protein] + phosphate. It catalyses the reaction O-phospho-L-threonyl-[protein] + H2O = L-threonyl-[protein] + phosphate. Protein phosphatase which regulates actin filament dynamics. Dephosphorylates and activates the actin binding/depolymerizing factor cofilin, which subsequently binds to actin filaments and stimulates their disassembly. Inhibitory phosphorylation of cofilin is mediated by LIMK1, which may also be dephosphorylated and inactivated by this protein. Required for spermatogenesis. Involved in acrosome biogenesis, probably by regulating cofilin-mediated actin cytoskeleton remodeling during proacrosomal vesicle fusion and/or Golgi to perinuclear vesicle trafficking. In Mus musculus (Mouse), this protein is Protein phosphatase Slingshot homolog 2 (Ssh2).